Reading from the N-terminus, the 422-residue chain is 4-hydroxy-3-methylbut-2-en-1-yl diphosphate synthase (flavodoxin) (422 aa).

Positions 316, 319, 362, and 369 each coordinate [4Fe-4S] cluster.

Belongs to the IspG family. The cofactor is [4Fe-4S] cluster.

It catalyses the reaction (2E)-4-hydroxy-3-methylbut-2-enyl diphosphate + oxidized [flavodoxin] + H2O + 2 H(+) = 2-C-methyl-D-erythritol 2,4-cyclic diphosphate + reduced [flavodoxin]. The protein operates within isoprenoid biosynthesis; isopentenyl diphosphate biosynthesis via DXP pathway; isopentenyl diphosphate from 1-deoxy-D-xylulose 5-phosphate: step 5/6. Functionally, converts 2C-methyl-D-erythritol 2,4-cyclodiphosphate (ME-2,4cPP) into 1-hydroxy-2-methyl-2-(E)-butenyl 4-diphosphate. In Ehrlichia ruminantium (strain Gardel), this protein is 4-hydroxy-3-methylbut-2-en-1-yl diphosphate synthase (flavodoxin).